A 679-amino-acid chain; its full sequence is Enzymatic polyprotein (679 aa).

The segment at 40-130 (LHCFVDTGAS…LYEPFIQFTD (91 aa)) is protease. Aspartate 45 is a catalytic residue. A Reverse transcriptase domain is found at 272–452 (LKVIKPSKSP…KKINFLGLEI (181 aa)).

This sequence belongs to the caulimoviridae enzymatic polyprotein family.

It carries out the reaction DNA(n) + a 2'-deoxyribonucleoside 5'-triphosphate = DNA(n+1) + diphosphate. In terms of biological role, encodes for at least two polypeptides: protease (PR) and reverse transcriptase (RT). The protease processes the polyprotein in cis. Reverse transcriptase is multifunctional enzyme that converts the viral RNA genome into dsDNA in viral cytoplasmic capsids. This enzyme displays a DNA polymerase activity that can copy either DNA or RNA templates, and a ribonuclease H (RNase H) activity that cleaves the RNA strand of RNA-DNA heteroduplexes in a partially processive 3'- to 5'-endonucleasic mode. Neo-synthesized pregenomic RNA (pgRNA) are encapsidated, and reverse-transcribed inside the nucleocapsid. Partial (+)DNA is synthesized from the (-)DNA template and generates the relaxed circular DNA (RC-DNA) genome. After budding and infection, the RC-DNA migrates in the nucleus, and is converted into a plasmid-like covalently closed circular DNA (cccDNA). The polypeptide is Enzymatic polyprotein (Cauliflower mosaic virus (strain CM-1841) (CaMV)).